The primary structure comprises 387 residues: 3-ketoacyl-CoA thiolase (387 aa).

Cys91 acts as the Acyl-thioester intermediate in catalysis. Catalysis depends on proton acceptor residues His343 and Cys373.

This sequence belongs to the thiolase-like superfamily. Thiolase family. In terms of assembly, heterotetramer of two alpha chains (FadB) and two beta chains (FadA).

It is found in the cytoplasm. It carries out the reaction an acyl-CoA + acetyl-CoA = a 3-oxoacyl-CoA + CoA. It participates in lipid metabolism; fatty acid beta-oxidation. Its function is as follows. Catalyzes the final step of fatty acid oxidation in which acetyl-CoA is released and the CoA ester of a fatty acid two carbons shorter is formed. The sequence is that of 3-ketoacyl-CoA thiolase from Aliivibrio fischeri (strain ATCC 700601 / ES114) (Vibrio fischeri).